Consider the following 397-residue polypeptide: Teichoic acid D-alanine hydrolase (397 aa).

An N-terminal signal peptide occupies residues 1 to 23 (MKFNKVKLVIHACVLLFIIISIA).

It localises to the cell membrane. The catalysed reaction is [(4-D-Ala)-(2-GlcNAc)-Rib-ol-P]n-[Gro-P]m-beta-D-ManNAc-(1-&gt;4)-alpha-D-GlcNAc-P-peptidoglycan + n H2O = [(2-GlcNAc)-Rib-ol-P]n-[Gro-P]m-beta-D-ManNAc-(1-&gt;4)-alpha-D-GlcNAc-P-peptidoglycan + n D-alanine.. Functionally, catalyzes the liberation of D-alanyl moieties present on wall teichoic acid (WTA) and lipoteichoic acid (LTA). Affects the methicillin resistance level and autolysis in the presence of Triton X-100 as well as the cell wall structure. The sequence is that of Teichoic acid D-alanine hydrolase (fmtA) from Staphylococcus aureus (strain Mu50 / ATCC 700699).